Reading from the N-terminus, the 264-residue chain is MNAIKNNISLQAQNLSYSIGNQKIIDNVSLSVNKGEIVAIIGPNGAGKSTLLRLLTGYIKPEHGQCDLHGTPIEQWPAEQLARTRAVMRQHSSLSFPFSVEEVVAMGRSPHGIHHKQTAIDTVIEQTDCQALRHRDYRQLSGGEQQRVQLARVLAQLWHPTPIECCLFLDEPTSALDLYHQQHTLRLLYRLTREQPMAMCCVLHDLNLAALYADKIFLLHKGKLVAAGTPEEVLNDHTLRKWYQADLGITRHPETQQPQIYLRQ.

Residues 10-246 (LQAQNLSYSI…HTLRKWYQAD (237 aa)) enclose the ABC transporter domain. Residue 42–49 (GPNGAGKS) participates in ATP binding.

The protein belongs to the ABC transporter superfamily. Heme (hemin) importer (TC 3.A.1.14.5) family. As to quaternary structure, the complex is composed of two ATP-binding proteins (HmuV), two transmembrane proteins (HmuU) and a solute-binding protein (HmuT).

Its subcellular location is the cell inner membrane. In terms of biological role, part of the ABC transporter complex HmuTUV involved in hemin import. Responsible for energy coupling to the transport system. The chain is Hemin import ATP-binding protein HmuV from Photorhabdus laumondii subsp. laumondii (strain DSM 15139 / CIP 105565 / TT01) (Photorhabdus luminescens subsp. laumondii).